We begin with the raw amino-acid sequence, 521 residues long: Runt-related transcription factor 2 (521 aa).

Disordered stretches follow at residues 18–59 (FWDP…QQQQ) and 222–340 (DGPR…RRIS). Low complexity-rich tracts occupy residues 21–33 (PSTSRRFSPPSSS) and 47–59 (AAQQQQQQQQQQQ). The Runt domain occupies 101–229 (TMVEIIADHP…TVDGPREPRR (129 aa)). Residue Lys-238 forms a Glycyl lysine isopeptide (Lys-Gly) (interchain with G-Cter in SUMO2) linkage. The required for interaction with FOXO1 stretch occupies residues 242 to 258 (FSDRLSDLGRIPHPSMR). Arg-267 is modified (asymmetric dimethylarginine). Residues 267–326 (RPSLNSAPSPFNPQGQSQITDPRQAQSSPPWSYDQSYPSYLSQMTSPSIHSTTPLSSTRG) are compositionally biased toward polar residues. Residues 336–439 (PRRISDDDTA…SQSQSGPFQT (104 aa)) form an interaction with KAT6A region. Residue Ser-340 is modified to Phosphoserine. The segment at 374 to 468 (RQFPSISSLT…VPGGDRSPSR (95 aa)) is interaction with KAT6B. Ser-451 is subject to Phosphoserine; by CDK1. The interval 460–521 (PGGDRSPSRM…RMDESVWRPY (62 aa)) is disordered. Composition is skewed to polar residues over residues 473-492 (CTTTSNGSTLLNPNLPNQND) and 499-511 (SHSSSPTVLNSSG). A compositionally biased stretch (basic and acidic residues) spans 512–521 (RMDESVWRPY).

In terms of assembly, heterodimer of an alpha and a beta subunit. The alpha subunit binds DNA as a monomer and through the Runt domain. DNA-binding is increased by heterodimerization. Interacts with XRCC6 (Ku70) and XRCC5 (Ku80). Interacts with HIVEP3. Interacts with IFI204. Interaction with SATB2; the interaction results in enhanced DNA binding and transactivation by these transcription factors. Binds to HIPK3. Interacts with FOXO1 (via a C-terminal region); the interaction inhibits RUNX2 transcriptional activity towards BGLAP. This interaction is prevented on insulin or IGF1 stimulation as FOXO1 is exported from the nucleus. Interacts with CCNB1, KAT6A and KAT6B. Interacts with FOXP3. Interacts with TMEM119. Interacts with OLFM2. Interacts with IPO7; the interaction inhibits RUNX2 nuclear translocation in osteoblasts. Interacts with DDX5. Post-translationally, phosphorylated; probably by MAP kinases (MAPK). Phosphorylation by HIPK3 is required for the SPEN/MINT and FGF2 transactivation during osteoblastic differentiation. Phosphorylation at Ser-451 by CDK1 promotes endothelial cell proliferation required for tumor angiogenesis probably by facilitating cell cycle progression. Isoform 3 is phosphorylated on Ser-340. In terms of tissue distribution, specifically expressed in osteoblasts.

Its subcellular location is the nucleus. It is found in the cytoplasm. Functionally, transcription factor involved in osteoblastic differentiation and skeletal morphogenesis. Essential for the maturation of osteoblasts and both intramembranous and endochondral ossification. CBF binds to the core site, 5'-PYGPYGGT-3', of a number of enhancers and promoters, including murine leukemia virus, polyomavirus enhancer, T-cell receptor enhancers, osteocalcin, osteopontin, bone sialoprotein, alpha 1(I) collagen, LCK, IL-3 and GM-CSF promoters. In osteoblasts, supports transcription activation: synergizes with SPEN/MINT to enhance FGFR2-mediated activation of the osteocalcin FGF-responsive element (OCFRE). Inhibits KAT6B-dependent transcriptional activation. In Homo sapiens (Human), this protein is Runt-related transcription factor 2 (RUNX2).